Reading from the N-terminus, the 96-residue chain is Iron-sulfur cluster assembly protein CyaY (96 aa).

The protein belongs to the frataxin family.

Its function is as follows. Involved in iron-sulfur (Fe-S) cluster assembly. May act as a regulator of Fe-S biogenesis. In Rickettsia bellii (strain RML369-C), this protein is Iron-sulfur cluster assembly protein CyaY.